The chain runs to 188 residues: Elongation factor P (188 aa).

The protein belongs to the elongation factor P family.

Its subcellular location is the cytoplasm. It functions in the pathway protein biosynthesis; polypeptide chain elongation. Its function is as follows. Involved in peptide bond synthesis. Stimulates efficient translation and peptide-bond synthesis on native or reconstituted 70S ribosomes in vitro. Probably functions indirectly by altering the affinity of the ribosome for aminoacyl-tRNA, thus increasing their reactivity as acceptors for peptidyl transferase. This chain is Elongation factor P, found in Rickettsia bellii (strain OSU 85-389).